Here is a 482-residue protein sequence, read N- to C-terminus: ATP synthase subunit beta (482 aa).

ATP is bound at residue 161 to 168 (GGAGVGKT).

Belongs to the ATPase alpha/beta chains family. F-type ATPases have 2 components, CF(1) - the catalytic core - and CF(0) - the membrane proton channel. CF(1) has five subunits: alpha(3), beta(3), gamma(1), delta(1), epsilon(1). CF(0) has three main subunits: a(1), b(2) and c(9-12). The alpha and beta chains form an alternating ring which encloses part of the gamma chain. CF(1) is attached to CF(0) by a central stalk formed by the gamma and epsilon chains, while a peripheral stalk is formed by the delta and b chains.

Its subcellular location is the cell inner membrane. The catalysed reaction is ATP + H2O + 4 H(+)(in) = ADP + phosphate + 5 H(+)(out). Functionally, produces ATP from ADP in the presence of a proton gradient across the membrane. The catalytic sites are hosted primarily by the beta subunits. The protein is ATP synthase subunit beta of Anaeromyxobacter dehalogenans (strain 2CP-C).